We begin with the raw amino-acid sequence, 199 residues long: Superoxide dismutase [Mn/Fe] 2 (199 aa).

His-27, His-81, Asp-161, and His-165 together coordinate Fe(3+). Positions 27, 81, 161, and 165 each coordinate Mn(2+).

It belongs to the iron/manganese superoxide dismutase family. Homodimer. Can also form a heterodimer with SodA. Mn(2+) is required as a cofactor. Requires Fe(3+) as cofactor.

The enzyme catalyses 2 superoxide + 2 H(+) = H2O2 + O2. Its function is as follows. Destroys superoxide anion radicals which are normally produced within the cells and which are toxic to biological systems. Catalyzes the dismutation of superoxide anion radicals into O2 and H2O2 by successive reduction and oxidation of the transition metal ion at the active site. The polypeptide is Superoxide dismutase [Mn/Fe] 2 (sodM) (Staphylococcus aureus (strain bovine RF122 / ET3-1)).